We begin with the raw amino-acid sequence, 59 residues long: Conotoxin ViVA (59 aa).

The signal sequence occupies residues 1–19 (MRCVPVFIILLLLIPSASS). The propeptide occupies 20 to 46 (AAVQPKTEKDDVPLASVHDSALRILSR). Q47 is modified (pyrrolidone carboxylic acid). 2 disulfide bridges follow: C48–C55 and C49–C56. At I58 the chain carries Isoleucine amide.

Belongs to the conotoxin T superfamily. Expressed by the venom duct.

The protein localises to the secreted. The sequence is that of Conotoxin ViVA from Conus virgo (Virgin cone).